The primary structure comprises 880 residues: Protein translocase subunit SecA (880 aa).

ATP is bound by residues Gln86, 104–108 (GEGKT), and Asp511. The segment at 837–871 (AQKIQRSDGDGARRPVEKPKKIGRNDPCPCGSGKK) is disordered. The span at 841-860 (QRSDGDGARRPVEKPKKIGR) shows a compositional bias: basic and acidic residues. 4 residues coordinate Zn(2+): Cys864, Cys866, Cys875, and Cys876.

Belongs to the SecA family. In terms of assembly, monomer and homodimer. Part of the essential Sec protein translocation apparatus which comprises SecA, SecYEG and auxiliary proteins SecDF. Other proteins may also be involved. Zn(2+) serves as cofactor.

Its subcellular location is the cell inner membrane. The protein localises to the cytoplasm. The catalysed reaction is ATP + H2O + cellular proteinSide 1 = ADP + phosphate + cellular proteinSide 2.. Functionally, part of the Sec protein translocase complex. Interacts with the SecYEG preprotein conducting channel. Has a central role in coupling the hydrolysis of ATP to the transfer of proteins into and across the cell membrane, serving as an ATP-driven molecular motor driving the stepwise translocation of polypeptide chains across the membrane. This chain is Protein translocase subunit SecA, found in Thermodesulfovibrio yellowstonii (strain ATCC 51303 / DSM 11347 / YP87).